The sequence spans 781 residues: uncharacterized protein (781 aa).

2 disordered regions span residues 1-27 and 56-268; these read MKKD…ELDD and NLHI…SDVH. The span at 11–27 shows a compositional bias: acidic residues; the sequence is ESLEEYDEENYTSELDD. Positions 57–73 are enriched in basic and acidic residues; the sequence is LHIDEKSKGNIHDDTNK. Residues 80–94 show a composition bias toward basic residues; it reads KRKGKLNNKKLKLKK. The segment covering 99 to 116 has biased composition (acidic residues); it reads SDEEEENDKNDKNDDDQY. 4 stretches are compositionally biased toward basic and acidic residues: residues 123–144, 170–188, 216–227, and 251–268; these read DEDR…KGDN, EKNH…HVSV, KTSKKNKNDKTN, and DDYH…SDVH. Residues 616–655 are a coiled coil; sequence NDTYTLSKLNNQINELTKKINILRGNLDKARKNHAAMKSN.

This is an uncharacterized protein from Plasmodium falciparum (isolate 3D7).